The chain runs to 477 residues: E3 ubiquitin-protein ligase TRIM17 (477 aa).

Residues 16-66 (CSICLDYFTDPVMTACGHNFCRECIQMSWEKGKVKKGKKKQKGSFPCPECR) form an RING-type zinc finger. A B box-type zinc finger spans residues 94 to 135 (QKRDLCQAHQEPLKLFCQDDQSPICVVCREAQEHRMHRVLPL). Zn(2+)-binding residues include Cys-99, His-102, Cys-121, and His-127. Residues 135–226 (LDEAAREYKL…KLQDSKASLD (92 aa)) are a coiled coil. In terms of domain architecture, B30.2/SPRY spans 276–475 (AIKTLCRVPG…MVISTVTMWV (200 aa)).

This sequence belongs to the TRIM/RBCC family. As to quaternary structure, interacts (via coiled coil) with TRIM44 (via coiled coil). Interacts with TRIM28; this interaction prevents TRIM28 activity on BCL2A1. Interacts with TRIM41; this interaction prevents TRIM41 activity on ZSCAN2. Interacts with BECN1. Interacts with NFATC3 and NFATC4; these interactions prevent NFATC3 and NFATC4 nuclear localization. Auto-ubiquitinated. Almost exclusively in the testis.

Its subcellular location is the cytoplasm. It localises to the lysosome. The catalysed reaction is S-ubiquitinyl-[E2 ubiquitin-conjugating enzyme]-L-cysteine + [acceptor protein]-L-lysine = [E2 ubiquitin-conjugating enzyme]-L-cysteine + N(6)-ubiquitinyl-[acceptor protein]-L-lysine.. It participates in protein modification; protein ubiquitination. In terms of biological role, E3 ubiquitin ligase that plays important roles in the regulation of neuronal apoptosis, selective autophagy or cell proliferation. Stimulates the degradation of kinetochore ZW10 interacting protein ZWINT in a proteasome-dependent manner, leading to negative regulation of cell proliferation. Inhibits autophagic degradation of diverse known targets while contributing to autophagy of midbodies. Autophagy-inhibitory activity involves MCL1, which TRIM17 assembles into complexes with the key autophagy regulator BECN1. Controls neuronal apoptosis by mediating ubiquitination and degradation of MCL1 to initiate neuronal death. In addition, regulates NFAT transcription factors NFATC3 and NFATC4 activities by preventing their nuclear localization, thus inhibiting their transcriptional activities. Decreases TRIM41-mediated degradation of ZSCAN2 thereby stimulating alpha-synuclein/SNCA transcription in neuronal cells. Prevents the E3 ubiquitin-ligase activity of TRIM28 and its interaction with anti-apoptotic BCL2A1, blocking TRIM28 from ubiquitinating BCL2A1. The chain is E3 ubiquitin-protein ligase TRIM17 (Trim17) from Mus musculus (Mouse).